The sequence spans 628 residues: MESLVFARRSGPTPSAAELARPLAEGLIKSPKPLMKKQAVKRHHHKHNLRHRYEFLETLGKGTYGKVKKARESSGRLVAIKSIRKDKIKDEQDLMHIRREIEIMSSLNHPHIIAIHEVFENSSKIVIVMEYASRGDLYDYISERQQLSEREARHFFRQIVSAVHYCHQNRVVHRDLKLENILLDANGNIKIADFGLSNLYHQGKFLQTFCGSPLYASPEIVNGKPYTGPEVDSWSLGVLLYILVHGTMPFDGHDHKILVKQISNGAYREPPKPSDACGLIRWLLMVNPTRRATLEDVASHWWVNWGYATRVGEQEAPHEGGHPGSDSARASMADWLRRSSRPLLENGAKVCSFFKQHAPGGGSTTPGLERQHSLKKSRKENDMAQSLHSDTADDTAHRPGKSNLKLPKGILKKKVSASAEGAQEDPPELSPIPVSPGQAAPPLPKKGILKKPRQRESGYYSSPEPSESGELLDVGDVFVSGDPKEQKPPQASGLLLHRKGILKLNGKFSQTALELAAPTTFGSLDELAPPRPLARASRPSGAVSEDSILSSESFDQLDLPERLPEPPLRGCVSVDNLTGLEEPPSEGPGSCLRRWRQDPLGDSCFSLTDCQEVTATYRQALRVCSKLT.

The residue at position 1 (M1) is an N-acetylmethionine. Positions 53-303 (YEFLETLGKG…LEDVASHWWV (251 aa)) constitute a Protein kinase domain. ATP is bound by residues 59-67 (LGKGTYGKV) and K81. D175 functions as the Proton acceptor in the catalytic mechanism. T208 is modified (phosphothreonine). Disordered stretches follow at residues 355-492 (KQHA…PQAS) and 522-570 (GSLD…PLRG). A compositionally biased stretch (pro residues) spans 428–444 (ELSPIPVSPGQAAPPLP). S435 is subject to Phosphoserine. A compositionally biased stretch (low complexity) spans 457 to 469 (SGYYSSPEPSESG). Residues S523, S544, S547, and S573 each carry the phosphoserine modification.

This sequence belongs to the protein kinase superfamily. CAMK Ser/Thr protein kinase family. SNF1 subfamily. Requires Mg(2+) as cofactor. Post-translationally, phosphorylated at Thr-208 by STK11/LKB1 in complex with STE20-related adapter-alpha (STRADA) pseudo kinase and CAB39. Autophosphorylation is also possible at Thr-208.

It catalyses the reaction L-seryl-[protein] + ATP = O-phospho-L-seryl-[protein] + ADP + H(+). The catalysed reaction is L-threonyl-[protein] + ATP = O-phospho-L-threonyl-[protein] + ADP + H(+). With respect to regulation, activated by phosphorylation on Thr-208. Its function is as follows. Stress-activated kinase involved in tolerance to glucose starvation. Induces cell-cell detachment by increasing F-actin conversion to G-actin. Expression is induced by CD95 or TNF-alpha, via NF-kappa-B. Protects cells from CD95-mediated apoptosis and is required for the increased motility and invasiveness of CD95-activated tumor cells. Phosphorylates LATS1 and LATS2. Plays a key role in neural tube closure during embryonic development through LATS2 phosphorylation and regulation of the nuclear localization of YAP1 a critical downstream regulatory target in the Hippo signaling pathway. In Pongo abelii (Sumatran orangutan), this protein is NUAK family SNF1-like kinase 2.